Here is a 223-residue protein sequence, read N- to C-terminus: RNA polymerase sigma-H factor (223 aa).

The Polymerase core binding signature appears at 67-80 (DIVQEGMIGLYKSI). A DNA-binding region (H-T-H motif) is located at residues 187–206 (YQEISEELNRHVKSIDNALQ).

Belongs to the sigma-70 factor family.

Functionally, sigma factors are initiation factors that promote the attachment of RNA polymerase to specific initiation sites and are then released. This sigma factor is involved in the transition to post-exponential phase in the beginning of sporulation. This Bacillus licheniformis protein is RNA polymerase sigma-H factor (sigH).